A 45-amino-acid polypeptide reads, in one-letter code: Scolopendra 20417.15 Da toxin (45 aa).

Residues Lys26–His45 are disordered.

The protein belongs to the CRISP family. Venom allergen 5-like subfamily. Contains 3 disulfide bonds. In terms of tissue distribution, expressed by the venom gland.

The protein resides in the secreted. This is Scolopendra 20417.15 Da toxin from Scolopendra viridicornis nigra (Brazilian giant centipede).